The primary structure comprises 333 residues: Glyceraldehyde-3-phosphate dehydrogenase (333 aa).

Residues 11–12, aspartate 35, and threonine 121 each bind NAD(+); that span reads RI. Residues 151–153 and threonine 182 each bind D-glyceraldehyde 3-phosphate; that span reads SCT. The Nucleophile role is filled by cysteine 152. Residue asparagine 183 participates in NAD(+) binding. Residues arginine 197, 210–211, and arginine 233 contribute to the D-glyceraldehyde 3-phosphate site; that span reads TG. NAD(+) is bound at residue asparagine 315.

The protein belongs to the glyceraldehyde-3-phosphate dehydrogenase family. In terms of assembly, homotetramer.

It localises to the cytoplasm. The enzyme catalyses D-glyceraldehyde 3-phosphate + phosphate + NAD(+) = (2R)-3-phospho-glyceroyl phosphate + NADH + H(+). The protein operates within carbohydrate degradation; glycolysis; pyruvate from D-glyceraldehyde 3-phosphate: step 1/5. Its function is as follows. Catalyzes the oxidative phosphorylation of glyceraldehyde 3-phosphate (G3P) to 1,3-bisphosphoglycerate (BPG) using the cofactor NAD. The first reaction step involves the formation of a hemiacetal intermediate between G3P and a cysteine residue, and this hemiacetal intermediate is then oxidized to a thioester, with concomitant reduction of NAD to NADH. The reduced NADH is then exchanged with the second NAD, and the thioester is attacked by a nucleophilic inorganic phosphate to produce BPG. The polypeptide is Glyceraldehyde-3-phosphate dehydrogenase (gap) (Thermotoga maritima (strain ATCC 43589 / DSM 3109 / JCM 10099 / NBRC 100826 / MSB8)).